The sequence spans 1394 residues: DNA-directed RNA polymerase subunit beta'' (1394 aa).

Positions 224, 295, 302, and 305 each coordinate Zn(2+).

This sequence belongs to the RNA polymerase beta' chain family. RpoC2 subfamily. As to quaternary structure, in plastids the minimal PEP RNA polymerase catalytic core is composed of four subunits: alpha, beta, beta', and beta''. When a (nuclear-encoded) sigma factor is associated with the core the holoenzyme is formed, which can initiate transcription. Zn(2+) serves as cofactor.

It localises to the plastid. The protein localises to the chloroplast. It carries out the reaction RNA(n) + a ribonucleoside 5'-triphosphate = RNA(n+1) + diphosphate. Its function is as follows. DNA-dependent RNA polymerase catalyzes the transcription of DNA into RNA using the four ribonucleoside triphosphates as substrates. The polypeptide is DNA-directed RNA polymerase subunit beta'' (Cucumis sativus (Cucumber)).